The chain runs to 76 residues: UPF0352 protein PC1_1633 (76 aa).

The protein belongs to the UPF0352 family.

The chain is UPF0352 protein PC1_1633 from Pectobacterium carotovorum subsp. carotovorum (strain PC1).